The following is an 818-amino-acid chain: Glycerol-3-phosphate acyltransferase (818 aa).

Residues 308–313 (CHRSHM) carry the HXXXXD motif motif.

Belongs to the GPAT/DAPAT family.

The protein resides in the cell inner membrane. It carries out the reaction sn-glycerol 3-phosphate + an acyl-CoA = a 1-acyl-sn-glycero-3-phosphate + CoA. The protein operates within phospholipid metabolism; CDP-diacylglycerol biosynthesis; CDP-diacylglycerol from sn-glycerol 3-phosphate: step 1/3. This is Glycerol-3-phosphate acyltransferase from Alteromonas mediterranea (strain DSM 17117 / CIP 110805 / LMG 28347 / Deep ecotype).